The sequence spans 317 residues: Taste receptor type 2 member 14 (317 aa).

The Extracellular segment spans residues 1–7 (MGDVIKS). Residues 8–28 (IFTFVLIVEFIIGNLGNSFIA) form a helical membrane-spanning segment. Residues 29–55 (LVNCIDWVKGRKISSVDQILTALAISR) lie on the Cytoplasmic side of the membrane. The chain crosses the membrane as a helical span at residues 56–76 (ISLVWLIFGSWCVSVFLPALF). Residues 77 to 87 (ATEKMFRMLTN) lie on the Extracellular side of the membrane. Positions 86 and 89 each coordinate cholesterol. Residues 88-108 (IWTVINHFSVWLATGLGTFYF) form a helical membrane-spanning segment. Over 109–129 (LKIANFSNSIFLYLKWRVKKV) the chain is Cytoplasmic. The chain crosses the membrane as a helical span at residues 130–150 (VLVLLLVTSVFLFLNIALINI). At 151–184 (HINASINGYRRNKTCSSDSSNFTRFSSLIVLTST) the chain is on the extracellular side. Residues Asn153, Asn162, and Asn171 are each glycosylated (N-linked (GlcNAc...) asparagine). Val180 provides a ligand contact to cholesterol. The chain crosses the membrane as a helical span at residues 185 to 205 (VFIFIPFTLSLAMFLLLIFSL). At 206–232 (WKHRKKMQHXVKRSGDASTKAHRGVKS) the chain is on the cytoplasmic side. A helical membrane pass occupies residues 233-253 (VITFFLLYAIFCLSFFISVWT). Residues 254–261 (SERLEENL) are Extracellular-facing. A helical membrane pass occupies residues 262–282 (IILSQVMGMAYPSCHSCVLIL). Cholesterol contacts are provided by Ser265 and Met268. The Cytoplasmic portion of the chain corresponds to 283–317 (GNKKLRQASLSVLLWLRYMFKDGEPSGHKEFRESS).

It belongs to the G-protein coupled receptor T2R family. In terms of assembly, core component of the TAS2R14-GNAI1 complex, consisting of TAS2R14, GNAI1, GNB1 and GNG2; within the complex interacts with GNAI1. Core component of the TAS2R14-GNAT3 complex, consisting of TAS2R14, GNAT3, GNB1 and GNG2; within the complex interacts with GNAT3. Core component of the TAS2R14-GNAS2 complex, consisting of TAS2R14, GNAS2, GNB1 and GNG2; within the complex interacts with GNAS2.

The protein localises to the membrane. The enzyme catalyses Ca(2+)(in) = Ca(2+)(out). The catalysed reaction is 3',5'-cyclic AMP(in) = 3',5'-cyclic AMP(out). With respect to regulation, basal activity is enhanced by binding to bitter tastants, such as flufenamic acid and aristolochic acid. Regulated by cholesterol in a concentration-dependent manner. In terms of biological role, gustducin-linked G-protein coupled receptor that plays a role in the perception of bitterness. The activity of this receptor stimulates GNAT3, activating the gustducin G-protein pathway. Likely plays a role in sensing the chemical composition of the gastrointestinal content and other extra-oral tissues via the inhibitory G-protein pathways. In Gorilla gorilla gorilla (Western lowland gorilla), this protein is Taste receptor type 2 member 14 (TAS2R14).